The sequence spans 522 residues: Exo-alpha-(1-&gt;6)-L-arabinofuranosidase (522 aa).

3 residues coordinate alpha-L-arabinofuranose: E39, N84, and N185. Residue E186 is the Proton donor/acceptor of the active site. Alpha-L-arabinofuranose-binding residues include Y257, E310, and Q370. The active-site Nucleophile is E310.

Belongs to the glycosyl hydrolase 51 family. In terms of assembly, homohexamer; trimer of dimers.

It catalyses the reaction Hydrolysis of terminal non-reducing alpha-L-arabinofuranoside residues in alpha-L-arabinosides.. The catalysed reaction is (20S)-ginsenoside Rc + H2O = L-arabinofuranose + (20S)-ginsenoside Rd. Completely inhibited by Cu(2+) and partially inhibited by Co(2+) and Ba(2+). Functionally, catalyzes the hydrolysis of p-nitrophenyl-alpha-L-arabinofuranoside (pNP-alphaL-Af) and the hydrolysis of the terminal alpha-L-arabinofuranoside at the C20 position of ginsenoside Rc to produce ginsenoside Rd. Cannot hydrolyze p-nitrophenyl-alpha-L-arabinopyranoside (pNP-alphaL-Ap) and ginsenoside Rb2. The chain is Exo-alpha-(1-&gt;6)-L-arabinofuranosidase from Bifidobacterium longum.